Here is a 150-residue protein sequence, read N- to C-terminus: Large ribosomal subunit protein uL11 (150 aa).

A disordered region spans residues 83–111 (AAGLKPQGKRNRAKGSEKPGRQTAGTVTA).

The protein belongs to the universal ribosomal protein uL11 family. As to quaternary structure, part of the ribosomal stalk of the 50S ribosomal subunit. Interacts with L10 and the large rRNA to form the base of the stalk. L10 forms an elongated spine to which L12 dimers bind in a sequential fashion forming a multimeric L10(L12)X complex. In terms of processing, one or more lysine residues are methylated.

Forms part of the ribosomal stalk which helps the ribosome interact with GTP-bound translation factors. The sequence is that of Large ribosomal subunit protein uL11 from Paracoccus denitrificans (strain Pd 1222).